A 695-amino-acid polypeptide reads, in one-letter code: Interleukin-1 receptor accessory protein-like 1 (695 aa).

An N-terminal signal peptide occupies residues 1–24; it reads MKAPIPHLILLYATFTQSLKVVTK. The Ig-like C2-type 1 domain maps to 25-134; it reads RGSADGCTDW…YCMKVSISLT (110 aa). Residues 25-357 lie on the Extracellular side of the membrane; that stretch reads RGSADGCTDW…LLHKRELMYT (333 aa). Cystine bridges form between C31–C126 and C53–C118. N63, N122, and N138 each carry an N-linked (GlcNAc...) asparagine glycan. Intrachain disulfides connect C143–C185 and C164–C216. 2 Ig-like C2-type domains span residues 143-232 and 242-350; these read CYNS…TELT and PKLL…VLLH. N213, N264, and N331 each carry an N-linked (GlcNAc...) asparagine glycan. A disulfide bridge links C267 with C334. The helical transmembrane segment at 358-378 threads the bilayer; it reads VELAGGLGAILLLLICSVTIY. Residues 379–695 lie on the Cytoplasmic side of the membrane; it reads KCYKIEIMLF…RETSISSVIW (317 aa). Residues 403–558 form the TIR domain; the sequence is KDYDAYLSYT…KFWKRLQYEM (156 aa). E490 is an active-site residue. The tract at residues 548–643 is interaction with NCS1; the sequence is SKFWKRLQYE…TGTLPLTSIG (96 aa). The tract at residues 657–679 is disordered; sequence NGQRPQTKSNREPNPDEAHTNSA. The span at 665–675 shows a compositional bias: basic and acidic residues; that stretch reads SNREPNPDEAH.

Belongs to the interleukin-1 receptor family. As to quaternary structure, homodimer. Interacts (calcium-independent) with NCS1/FREQ. Interacts (via the first immunoglobilin domain) with PTPRD (via the second immunoglobilin domain); this interaction is PTPRD-splicing-dependent and induces pre- and post-synaptic differentiation of neurons and is required for IL1RAPL1-mediated synapse formation. Detected in total brain extracts, olfactory bulb, hippocampus and striatum (at protein level).

It localises to the cell membrane. Its subcellular location is the cytoplasm. The protein resides in the cell projection. The protein localises to the axon. It is found in the dendrite. It catalyses the reaction NAD(+) + H2O = ADP-D-ribose + nicotinamide + H(+). In terms of biological role, may regulate secretion and presynaptic differentiation through inhibition of the activity of N-type voltage-gated calcium channel. May activate the MAP kinase JNK. Plays a role in neurite outgrowth. During dendritic spine formation can bidirectionally induce pre- and post-synaptic differentiation of neurons by trans-synaptically binding to PTPRD. The protein is Interleukin-1 receptor accessory protein-like 1 (Il1rapl1) of Mus musculus (Mouse).